The following is a 220-amino-acid chain: N-(5'-phosphoribosyl)anthranilate isomerase (220 aa).

The protein belongs to the TrpF family.

The enzyme catalyses N-(5-phospho-beta-D-ribosyl)anthranilate = 1-(2-carboxyphenylamino)-1-deoxy-D-ribulose 5-phosphate. It participates in amino-acid biosynthesis; L-tryptophan biosynthesis; L-tryptophan from chorismate: step 3/5. In Leptothrix cholodnii (strain ATCC 51168 / LMG 8142 / SP-6) (Leptothrix discophora (strain SP-6)), this protein is N-(5'-phosphoribosyl)anthranilate isomerase.